The primary structure comprises 533 residues: DEAD-box ATP-dependent RNA helicase CshA (533 aa).

Positions 2–30 match the Q motif motif; it reads TTFRELGLSDSLLQSVESMGFEEATPIQA. In terms of domain architecture, Helicase ATP-binding spans 33–203; that stretch reads IPHALQGKDI…ERFMTEPQHI (171 aa). ATP is bound at residue 46-53; sequence AQTGTGKT. The DEAD box motif lies at 151–154; that stretch reads DEAD. A Helicase C-terminal domain is found at 214–374; that stretch reads NIQQFYLEVQ…RMDAPTLDEA (161 aa). A disordered region spans residues 428–533; that stretch reads TTPIALTSEP…ERKHHSRPQA (106 aa). The span at 458-512 shows a compositional bias: basic and acidic residues; sequence DGNRNRSRDGRGGGDGRNRDRNRDGRNRDGNRDRNRDGNRDRNRDGGSRGRRGEG. Residues 524–533 are compositionally biased toward basic residues; that stretch reads ERKHHSRPQA.

It belongs to the DEAD box helicase family. CshA subfamily. Oligomerizes, may be a member of the RNA degradosome.

It is found in the cytoplasm. The catalysed reaction is ATP + H2O = ADP + phosphate + H(+). In terms of biological role, DEAD-box RNA helicase possibly involved in RNA degradation. May work in conjunction with the cold shock proteins to ensure proper initiation of transcription at low and optimal temperatures. Unwinds dsRNA in both 5'- and 3'-directions and shows RNA-dependent ATPase activity. Probably has a somewhat redundant function with cshB, as cshA can partially complement the growth effects of a cshB deletion. Plays a role in adaptation to cold, oxididant and pH stress. The polypeptide is DEAD-box ATP-dependent RNA helicase CshA (Bacillus cereus (strain ATCC 14579 / DSM 31 / CCUG 7414 / JCM 2152 / NBRC 15305 / NCIMB 9373 / NCTC 2599 / NRRL B-3711)).